We begin with the raw amino-acid sequence, 259 residues long: Electron transfer flavoprotein subunit beta (259 aa).

The protein belongs to the ETF beta-subunit/FixA family. In terms of assembly, heterodimer of an alpha and a beta subunit. Requires FAD as cofactor. The cofactor is AMP.

Its function is as follows. The electron transfer flavoprotein serves as a specific electron acceptor for other dehydrogenases. It transfers the electrons to the main respiratory chain via ETF-ubiquinone oxidoreductase (ETF dehydrogenase). The polypeptide is Electron transfer flavoprotein subunit beta (etfB) (Clostridium acetobutylicum (strain ATCC 824 / DSM 792 / JCM 1419 / IAM 19013 / LMG 5710 / NBRC 13948 / NRRL B-527 / VKM B-1787 / 2291 / W)).